We begin with the raw amino-acid sequence, 206 residues long: dITP/XTP pyrophosphatase (206 aa).

7–12 (SRNPKK) serves as a coordination point for substrate. Asp72 serves as the catalytic Proton acceptor. Residue Asp72 coordinates Mg(2+). Residues Ser73, 155–158 (FGYD), Lys178, and 183–184 (HR) contribute to the substrate site.

The protein belongs to the HAM1 NTPase family. Homodimer. Mg(2+) is required as a cofactor.

It carries out the reaction XTP + H2O = XMP + diphosphate + H(+). The catalysed reaction is dITP + H2O = dIMP + diphosphate + H(+). It catalyses the reaction ITP + H2O = IMP + diphosphate + H(+). Its function is as follows. Pyrophosphatase that catalyzes the hydrolysis of nucleoside triphosphates to their monophosphate derivatives, with a high preference for the non-canonical purine nucleotides XTP (xanthosine triphosphate), dITP (deoxyinosine triphosphate) and ITP. Seems to function as a house-cleaning enzyme that removes non-canonical purine nucleotides from the nucleotide pool, thus preventing their incorporation into DNA/RNA and avoiding chromosomal lesions. The polypeptide is dITP/XTP pyrophosphatase (Mycobacteroides abscessus (strain ATCC 19977 / DSM 44196 / CCUG 20993 / CIP 104536 / JCM 13569 / NCTC 13031 / TMC 1543 / L948) (Mycobacterium abscessus)).